A 440-amino-acid chain; its full sequence is Histidinol dehydrogenase (440 aa).

Residues Y139, Q200, and N223 each contribute to the NAD(+) site. Substrate-binding residues include S246, Q268, and H271. 2 residues coordinate Zn(2+): Q268 and H271. Residues E336 and H337 each act as proton acceptor in the active site. The substrate site is built by H337, D370, E424, and H429. Zn(2+) is bound at residue D370. H429 contributes to the Zn(2+) binding site.

Belongs to the histidinol dehydrogenase family. It depends on Zn(2+) as a cofactor.

It carries out the reaction L-histidinol + 2 NAD(+) + H2O = L-histidine + 2 NADH + 3 H(+). Its pathway is amino-acid biosynthesis; L-histidine biosynthesis; L-histidine from 5-phospho-alpha-D-ribose 1-diphosphate: step 9/9. In terms of biological role, catalyzes the sequential NAD-dependent oxidations of L-histidinol to L-histidinaldehyde and then to L-histidine. This Bordetella bronchiseptica (strain ATCC BAA-588 / NCTC 13252 / RB50) (Alcaligenes bronchisepticus) protein is Histidinol dehydrogenase.